Reading from the N-terminus, the 338-residue chain is UDP-glucose 4-epimerase (338 aa).

NAD(+)-binding positions include 11-12 (YI), 31-36 (DNLCNS), 58-59 (DI), 80-84 (FAGLK), asparagine 99, serine 124, tyrosine 149, lysine 153, and phenylalanine 178. Residues serine 124 and tyrosine 149 each coordinate substrate. The active-site Proton acceptor is the tyrosine 149. Substrate is bound by residues asparagine 179, 199-200 (NL), 216-218 (SVF), arginine 231, and 292-295 (RPGD).

The protein belongs to the NAD(P)-dependent epimerase/dehydratase family. Homodimer. It depends on NAD(+) as a cofactor.

It catalyses the reaction UDP-alpha-D-glucose = UDP-alpha-D-galactose. It functions in the pathway carbohydrate metabolism; galactose metabolism. Its function is as follows. Involved in the metabolism of galactose. Catalyzes the conversion of UDP-galactose (UDP-Gal) to UDP-glucose (UDP-Glc) through a mechanism involving the transient reduction of NAD. The sequence is that of UDP-glucose 4-epimerase (galE) from Pasteurella multocida (strain Pm70).